Consider the following 174-residue polypeptide: Austinoid biosynthesis clusters protein H (174 aa).

The protein belongs to the trt14 isomerase family. As to quaternary structure, homodimer.

It functions in the pathway secondary metabolite biosynthesis; terpenoid biosynthesis. Functionally, part of the gene cluster B that mediates the biosynthesis of austinol and dehydroaustinol, two fungal meroterpenoids. The first step of the pathway is the synthesis of 3,5-dimethylorsellinic acid by the polyketide synthase ausA. 3,5-dimethylorsellinic acid is then prenylated by the polyprenyl transferase ausN. Further epoxidation by the FAD-dependent monooxygenase ausM and cyclization by the probable terpene cyclase ausL lead to the formation of protoaustinoid A. Protoaustinoid A is then oxidized to spiro-lactone preaustinoid A3 by the combined action of the FAD-binding monooxygenases ausB and ausC, and the dioxygenase ausE. Acid-catalyzed keto-rearrangement and ring contraction of the tetraketide portion of preaustinoid A3 by ausJ lead to the formation of preaustinoid A4. The aldo-keto reductase ausK, with the help of ausH, is involved in the next step by transforming preaustinoid A4 into isoaustinone which is in turn hydroxylated by the P450 monooxygenase ausI to form austinolide. Finally, the cytochrome P450 monooxygenase ausG modifies austinolide to austinol. Austinol can be further modified to dehydroaustinol which forms a diffusible complex with diorcinol that initiates conidiation. Due to genetic rearrangements of the clusters and the subsequent loss of some enzymes, the end products of the Emericella nidulans austinoid biosynthesis clusters are austinol and dehydroaustinol, even if additional enzymes, such as the O-acetyltransferase ausQ and the cytochrome P450 monooxygenase ausR are still functional. The polypeptide is Austinoid biosynthesis clusters protein H (Emericella nidulans (strain FGSC A4 / ATCC 38163 / CBS 112.46 / NRRL 194 / M139) (Aspergillus nidulans)).